The sequence spans 197 residues: MSEALELLGQDIVARAPGVLGHSVAFGELTIVARAASVIDTLTFLRDDAACRFHQLIDLTGVDYPERAARFDVVYHLLSLVKNHRIRLKVSTDEDTPVPSVTPVFPVADWFEREAFDMYGIFFDGHPDLRRILTDYGFHGHPLRKDFPMTGYVEVRYDDELKRVVYEPVKITEFRAFDFLSPWEGAKYALPGDEKAQ.

This sequence belongs to the complex I 30 kDa subunit family. In terms of assembly, NDH-1 is composed of 14 different subunits. Subunits NuoB, C, D, E, F, and G constitute the peripheral sector of the complex.

Its subcellular location is the cell inner membrane. It carries out the reaction a quinone + NADH + 5 H(+)(in) = a quinol + NAD(+) + 4 H(+)(out). Functionally, NDH-1 shuttles electrons from NADH, via FMN and iron-sulfur (Fe-S) centers, to quinones in the respiratory chain. The immediate electron acceptor for the enzyme in this species is believed to be ubiquinone. Couples the redox reaction to proton translocation (for every two electrons transferred, four hydrogen ions are translocated across the cytoplasmic membrane), and thus conserves the redox energy in a proton gradient. This is NADH-quinone oxidoreductase subunit C from Caulobacter vibrioides (strain ATCC 19089 / CIP 103742 / CB 15) (Caulobacter crescentus).